Here is a 38-residue protein sequence, read N- to C-terminus: Large ribosomal subunit protein bL36 (38 aa).

It belongs to the bacterial ribosomal protein bL36 family.

The protein is Large ribosomal subunit protein bL36 of Buchnera aphidicola subsp. Baizongia pistaciae (strain Bp).